A 142-amino-acid polypeptide reads, in one-letter code: uncharacterized protein (142 aa).

In terms of domain architecture, Peptidase C39 spans 18–137; it reads QSSGYSCGPA…KIFTGNVLVV (120 aa).

This is an uncharacterized protein from Methanothermobacter marburgensis (strain ATCC BAA-927 / DSM 2133 / JCM 14651 / NBRC 100331 / OCM 82 / Marburg) (Methanobacterium thermoautotrophicum).